Reading from the N-terminus, the 324-residue chain is tRNA dimethylallyltransferase (324 aa).

Residue 20–27 (GPTASGKS) coordinates ATP. 22 to 27 (TASGKS) serves as a coordination point for substrate. Interaction with substrate tRNA stretches follow at residues 45-48 (DSAL), 168-172 (QRLIR), and 284-291 (KRQITWLR).

The protein belongs to the IPP transferase family. Monomer. Requires Mg(2+) as cofactor.

The catalysed reaction is adenosine(37) in tRNA + dimethylallyl diphosphate = N(6)-dimethylallyladenosine(37) in tRNA + diphosphate. Its function is as follows. Catalyzes the transfer of a dimethylallyl group onto the adenine at position 37 in tRNAs that read codons beginning with uridine, leading to the formation of N6-(dimethylallyl)adenosine (i(6)A). This chain is tRNA dimethylallyltransferase, found in Hydrogenovibrio crunogenus (strain DSM 25203 / XCL-2) (Thiomicrospira crunogena).